The primary structure comprises 634 residues: Probable potassium transport system protein Kup (634 aa).

Helical transmembrane passes span 19 to 39 (AVGL…TSPL), 62 to 82 (VLSL…VIFV), 113 to 133 (FVVV…MITP), 150 to 170 (GLEH…FLIQ), 177 to 197 (IGIL…ALGV), 225 to 245 (IGVA…ALYA), 259 to 279 (WFLL…ATIL), 291 to 311 (LLAP…ATVI), 349 to 369 (IYIG…VLGF), 379 to 399 (YGVA…VVIW), 406 to 426 (LWLG…FFAA), and 431 to 451 (VVQG…LMST).

Belongs to the HAK/KUP transporter (TC 2.A.72) family.

The protein resides in the cell inner membrane. The catalysed reaction is K(+)(in) + H(+)(in) = K(+)(out) + H(+)(out). Functionally, transport of potassium into the cell. Likely operates as a K(+):H(+) symporter. The chain is Probable potassium transport system protein Kup from Pseudomonas paraeruginosa (strain DSM 24068 / PA7) (Pseudomonas aeruginosa (strain PA7)).